The chain runs to 366 residues: Peroxisomal (S)-2-hydroxy-acid oxidase GLO4 (366 aa).

In terms of domain architecture, FMN hydroxy acid dehydrogenase spans 1–360 (MEDNLPVNVR…TRSHVMTEGD (360 aa)). Y27 is an a 2-oxocarboxylate binding site. Residues 80–82 (PTG), S109, 130–132 (QLY), and T158 each bind FMN. Residue Y132 coordinates a 2-oxocarboxylate. A 2-oxocarboxylate is bound at residue R167. K231 and S253 together coordinate FMN. The active-site Proton acceptor is H255. Position 258 (R258) interacts with a 2-oxocarboxylate. Residues 286 to 290 (DGGIR) and 309 to 310 (XX) contribute to the FMN site. The Microbody targeting signal signature appears at 364 to 366 (SLL).

The protein belongs to the FMN-dependent alpha-hydroxy acid dehydrogenase family. In terms of assembly, homotetramer. The cofactor is FMN.

The protein resides in the peroxisome. The enzyme catalyses a (2S)-2-hydroxycarboxylate + O2 = a 2-oxocarboxylate + H2O2. Its pathway is lipid metabolism; fatty acid metabolism. Functionally, oxidase that catalyzes the oxidation of a broad range of 2-hydroxyacids to the corresponding 2-oxoacids, with a reduction of O2 to H2O2. May be involved in a general medium- and long-chain fatty acid catabolic pathway such as alpha-oxidation. The protein is Peroxisomal (S)-2-hydroxy-acid oxidase GLO4 (GLO4) of Oryza sativa subsp. indica (Rice).